The following is a 405-amino-acid chain: MEEFHKVRRLPPYVFEQVNRLKASARAAGADIIDLGMGNPDLPTPQSIVDKLCEVVQDPRTHRYSSSKGIPGLRRAQAAYYARRFGVKLNPETQVVATLGSKEGFANMAQAITAPGDVVLCPNPTYPIHAFGFLMAGGVIRSISVEPDESFFPPLERAVRHSIPKPLALILNYPSNPTAQVATLDFYKDVIAFAKKHDIIVLSDLAYSEIYFDDAPPPSVLEVPGATDVTVEFTSMSKTFSMPGWRMGFAVGNERLIAALTRVKSYLDYGAFTPIQVAATQALNGDGSDIAEVRAIYKRRRDVMVESFGKAGFEVPPPPATMFAWAKIPEKFRHLGSLEFSKLLVEKADVAVAPGIGFGEQGDDYVRLALVENEHRIRQAARNIKRFLSSADETMHNVISLNAHR.

Residue Lys-238 is modified to N6-(pyridoxal phosphate)lysine.

The protein belongs to the class-I pyridoxal-phosphate-dependent aminotransferase family. As to quaternary structure, homodimer. Requires pyridoxal 5'-phosphate as cofactor.

Its subcellular location is the cytoplasm. The chain is Putative aminotransferase AatC (aatC) from Rhizobium meliloti (strain 1021) (Ensifer meliloti).